Consider the following 203-residue polypeptide: Recombination protein RecR (203 aa).

Residues 58–73 (CDYCGNLDVVSICNIC) form a C4-type zinc finger. A Toprim domain is found at 81-177 (SIIAIVESVA…KISKLASGIP (97 aa)).

This sequence belongs to the RecR family.

Its function is as follows. May play a role in DNA repair. It seems to be involved in an RecBC-independent recombinational process of DNA repair. It may act with RecF and RecO. The sequence is that of Recombination protein RecR from Orientia tsutsugamushi (strain Boryong) (Rickettsia tsutsugamushi).